The primary structure comprises 464 residues: Arginine biosynthesis bifunctional protein ArgJ, chloroplastic (464 aa).

Substrate is bound by residues Thr208, Lys234, Thr245, Glu332, Asn459, and Thr464. Thr245 (nucleophile) is an active-site residue.

The protein belongs to the ArgJ family. As to quaternary structure, heterodimer of an alpha and a beta chain.

The protein localises to the plastid. It is found in the chloroplast. It carries out the reaction N(2)-acetyl-L-ornithine + L-glutamate = N-acetyl-L-glutamate + L-ornithine. The enzyme catalyses L-glutamate + acetyl-CoA = N-acetyl-L-glutamate + CoA + H(+). Its pathway is amino-acid biosynthesis; L-arginine biosynthesis; L-ornithine and N-acetyl-L-glutamate from L-glutamate and N(2)-acetyl-L-ornithine (cyclic): step 1/1. It participates in amino-acid biosynthesis; L-arginine biosynthesis; N(2)-acetyl-L-ornithine from L-glutamate: step 1/4. Its function is as follows. Catalyzes two activities which are involved in the cyclic version of arginine biosynthesis: the synthesis of acetylglutamate from glutamate and acetyl-CoA, and of ornithine by transacetylation between acetylornithine and glutamate. The protein is Arginine biosynthesis bifunctional protein ArgJ, chloroplastic of Zea mays (Maize).